We begin with the raw amino-acid sequence, 276 residues long: Glutamate racemase (276 aa).

Residues Asp12–Ser13 and Tyr44–Gly45 each bind substrate. Cys76 acts as the Proton donor/acceptor in catalysis. Asn77 to Thr78 contributes to the substrate binding site. Catalysis depends on Cys187, which acts as the Proton donor/acceptor. Residue Thr188 to His189 participates in substrate binding.

The protein belongs to the aspartate/glutamate racemases family.

It carries out the reaction L-glutamate = D-glutamate. Its pathway is cell wall biogenesis; peptidoglycan biosynthesis. In terms of biological role, provides the (R)-glutamate required for cell wall biosynthesis. The protein is Glutamate racemase of Granulibacter bethesdensis (strain ATCC BAA-1260 / CGDNIH1).